The chain runs to 392 residues: Heat-inducible transcription repressor HrcA (392 aa).

It belongs to the HrcA family.

Its function is as follows. Negative regulator of class I heat shock genes (grpE-dnaK-dnaJ and groELS operons). Prevents heat-shock induction of these operons. In Chlamydia trachomatis serovar D (strain ATCC VR-885 / DSM 19411 / UW-3/Cx), this protein is Heat-inducible transcription repressor HrcA.